The following is a 458-amino-acid chain: 5-hydroxytryptamine receptor 2C (458 aa).

The N-terminal stretch at 1-32 (MVNLRNAVHSFLVHLIGLLVWQCDISVSPVAA) is a signal peptide. Residues 33-55 (IVTDIFNTSDGGRFKFPDGVQNW) are Extracellular-facing. A helical transmembrane segment spans residues 56-80 (PALSIVVIIIMTIGGNILVIMAVSM). At 81–86 (EKKLHN) the chain is on the cytoplasmic side. A helical membrane pass occupies residues 87–111 (ATNYFLMSLAIADMLVGLLVMPLSL). Topologically, residues 112-128 (LAILYDYVWPLPRYLCP) are extracellular. Residues Cys127 and Cys207 are joined by a disulfide bond. The helical transmembrane segment at 129-151 (VWISLDVLFSTASIMHLCAISLD) threads the bilayer. An ergotamine-binding site is contributed by Thr139. A DRY motif; important for ligand-induced conformation changes motif is present at residues 151 to 153 (DRY). The Cytoplasmic portion of the chain corresponds to 152–167 (RYVAIRNPIEHSRFNS). Residues 168–189 (RTKAIMKIAIVWAISIGVSVPI) traverse the membrane as a helical segment. Topologically, residues 190–213 (PVIGLRDERKVFVNNTTCVLNDPN) are extracellular. Leu209 provides a ligand contact to ergotamine. A helical transmembrane segment spans residues 214 to 236 (FVLIGSFVAFFIPLTIMVITYCL). At 237–311 (TIYVLRRQAL…AINNERKASK (75 aa)) the chain is on the cytoplasmic side. Residues 274–301 (EENSANPNQDQNARRRKKKERRPRGTMQ) are disordered. Residues 287 to 297 (RRRKKKERRPR) show a composition bias toward basic residues. Residues 312 to 336 (VLGIVFFVFLIMWCPFFITNILSVL) form a helical membrane-spanning segment. An intrachain disulfide couples Cys337 to Cys341. Topologically, residues 337–347 (CEKSCNQKLME) are extracellular. The chain crosses the membrane as a helical span at residues 348–370 (KLLNVFVWIGYVCSGINPLVYTL). The NPxxY motif; important for ligand-induced conformation changes and signaling motif lies at 364 to 368 (NPLVY). The Cytoplasmic portion of the chain corresponds to 371–458 (FNKIYRRAFS…SVVSERISSV (88 aa)). A PDZ-binding motif is present at residues 456 to 458 (SSV).

Belongs to the G-protein coupled receptor 1 family. Interacts with MPDZ. Interacts with ARRB2. Interacts with MPP3; this interaction stabilizes the receptor at the plasma membrane and prevents the desensitization of the HTR2C receptor-mediated calcium response.

Its subcellular location is the cell membrane. In terms of biological role, G-protein coupled receptor for 5-hydroxytryptamine (serotonin). Also functions as a receptor for various drugs and psychoactive substances, including ergot alkaloid derivatives, 1-2,5,-dimethoxy-4-iodophenyl-2-aminopropane (DOI) and lysergic acid diethylamide (LSD). Ligand binding causes a conformation change that triggers signaling via guanine nucleotide-binding proteins (G proteins) and modulates the activity of downstream effectors. HTR2C is coupled to G(q)/G(11) G alpha proteins and activates phospholipase C-beta, releasing diacylglycerol (DAG) and inositol 1,4,5-trisphosphate (IP3) second messengers that modulate the activity of phosphatidylinositol 3-kinase and promote the release of Ca(2+) ions from intracellular stores, respectively. Beta-arrestin family members inhibit signaling via G proteins and mediate activation of alternative signaling pathways. Regulates neuronal activity via the activation of short transient receptor potential calcium channels in the brain, and thereby modulates the activation of pro-opiomelanocortin neurons and the release of CRH that then regulates the release of corticosterone. Plays a role in the regulation of appetite and eating behavior, responses to anxiogenic stimuli and stress. Plays a role in insulin sensitivity and glucose homeostasis. This Pan troglodytes (Chimpanzee) protein is 5-hydroxytryptamine receptor 2C.